The primary structure comprises 203 residues: Peptide deformylase (203 aa).

Positions 121 and 163 each coordinate Fe cation. Residue glutamate 164 is part of the active site. Histidine 167 contributes to the Fe cation binding site.

Belongs to the polypeptide deformylase family. Fe(2+) is required as a cofactor.

It carries out the reaction N-terminal N-formyl-L-methionyl-[peptide] + H2O = N-terminal L-methionyl-[peptide] + formate. Removes the formyl group from the N-terminal Met of newly synthesized proteins. Requires at least a dipeptide for an efficient rate of reaction. N-terminal L-methionine is a prerequisite for activity but the enzyme has broad specificity at other positions. This is Peptide deformylase from Prochlorococcus marinus (strain MIT 9515).